A 1324-amino-acid polypeptide reads, in one-letter code: Probable phosphoribosylformylglycinamidine synthase (1324 aa).

ATP is bound by residues 314-325 (GATTGTGGRIRD), 394-396 (SGF), and Ala-681. Positions 682, 721, 725, and 894 each coordinate Mg(2+). ATP is bound at residue Ser-896. The 243-residue stretch at 1053–1295 (RVAIIREEGS…LTWQWAESSE (243 aa)) folds into the Glutamine amidotransferase type-1 domain. Cys-1146 functions as the Nucleophile in the catalytic mechanism. Residues His-1280 and Asp-1282 contribute to the active site.

The protein in the N-terminal section; belongs to the FGAMS family.

It localises to the cytoplasm. The catalysed reaction is N(2)-formyl-N(1)-(5-phospho-beta-D-ribosyl)glycinamide + L-glutamine + ATP + H2O = 2-formamido-N(1)-(5-O-phospho-beta-D-ribosyl)acetamidine + L-glutamate + ADP + phosphate + H(+). It functions in the pathway purine metabolism; IMP biosynthesis via de novo pathway; 5-amino-1-(5-phospho-D-ribosyl)imidazole from N(2)-formyl-N(1)-(5-phospho-D-ribosyl)glycinamide: step 1/2. Its function is as follows. Phosphoribosylformylglycinamidine synthase involved in the purines biosynthetic pathway. Catalyzes the ATP-dependent conversion of formylglycinamide ribonucleotide (FGAR) and glutamine to yield formylglycinamidine ribonucleotide (FGAM) and glutamate. This is Probable phosphoribosylformylglycinamidine synthase from Caenorhabditis elegans.